The sequence spans 216 residues: N-acetyltransferase 9-like protein (216 aa).

Positions 68-215 (VLLNENDEAK…DHVELELMRT (148 aa)) constitute an N-acetyltransferase domain.

It belongs to the acetyltransferase family. GNAT subfamily.

Its subcellular location is the cytoplasm. It is found in the nucleus. This chain is N-acetyltransferase 9-like protein, found in Schizosaccharomyces pombe (strain 972 / ATCC 24843) (Fission yeast).